A 167-amino-acid polypeptide reads, in one-letter code: Lipoprotein signal peptidase (167 aa).

A run of 4 helical transmembrane segments spans residues 8 to 28 (TFLTLLLLASIDWVSKLVVLL), 46 to 66 (WGHFSFLIIPSFNEGAAFGLF), 68 to 88 (QYKIPLLIFRVCVILGLALFL), and 101 to 121 (IALTLILAGALGNVGDILLHG). Residues D125 and D143 contribute to the active site. A helical membrane pass occupies residues 139–159 (FNLADAFISIGTLLLIGHLYF).

Belongs to the peptidase A8 family.

The protein localises to the cell inner membrane. It carries out the reaction Release of signal peptides from bacterial membrane prolipoproteins. Hydrolyzes -Xaa-Yaa-Zaa-|-(S,diacylglyceryl)Cys-, in which Xaa is hydrophobic (preferably Leu), and Yaa (Ala or Ser) and Zaa (Gly or Ala) have small, neutral side chains.. It participates in protein modification; lipoprotein biosynthesis (signal peptide cleavage). Its function is as follows. This protein specifically catalyzes the removal of signal peptides from prolipoproteins. This Chlamydia trachomatis serovar L2b (strain UCH-1/proctitis) protein is Lipoprotein signal peptidase.